The sequence spans 185 residues: Acireductone dioxygenase (185 aa).

Residues His-97, His-99, Glu-103, and His-141 each coordinate Fe(2+). Ni(2+) contacts are provided by His-97, His-99, Glu-103, and His-141.

This sequence belongs to the acireductone dioxygenase (ARD) family. In terms of assembly, monomer. The cofactor is Fe(2+). Ni(2+) is required as a cofactor.

It catalyses the reaction 1,2-dihydroxy-5-(methylsulfanyl)pent-1-en-3-one + O2 = 3-(methylsulfanyl)propanoate + CO + formate + 2 H(+). The enzyme catalyses 1,2-dihydroxy-5-(methylsulfanyl)pent-1-en-3-one + O2 = 4-methylsulfanyl-2-oxobutanoate + formate + 2 H(+). It functions in the pathway amino-acid biosynthesis; L-methionine biosynthesis via salvage pathway; L-methionine from S-methyl-5-thio-alpha-D-ribose 1-phosphate: step 5/6. Catalyzes 2 different reactions between oxygen and the acireductone 1,2-dihydroxy-3-keto-5-methylthiopentene (DHK-MTPene) depending upon the metal bound in the active site. Fe-containing acireductone dioxygenase (Fe-ARD) produces formate and 2-keto-4-methylthiobutyrate (KMTB), the alpha-ketoacid precursor of methionine in the methionine recycle pathway. Ni-containing acireductone dioxygenase (Ni-ARD) produces methylthiopropionate, carbon monoxide and formate, and does not lie on the methionine recycle pathway. The chain is Acireductone dioxygenase from Stenotrophomonas maltophilia (strain R551-3).